The following is a 236-amino-acid chain: SPbeta prophage-derived uncharacterized protein YomV (236 aa).

The chain is SPbeta prophage-derived uncharacterized protein YomV (yomV) from Bacillus subtilis (strain 168).